Reading from the N-terminus, the 477-residue chain is Glycogen synthase (477 aa).

ADP-alpha-D-glucose is bound at residue Lys15.

The protein belongs to the glycosyltransferase 1 family. Bacterial/plant glycogen synthase subfamily.

It catalyses the reaction [(1-&gt;4)-alpha-D-glucosyl](n) + ADP-alpha-D-glucose = [(1-&gt;4)-alpha-D-glucosyl](n+1) + ADP + H(+). Its pathway is glycan biosynthesis; glycogen biosynthesis. In terms of biological role, synthesizes alpha-1,4-glucan chains using ADP-glucose. The chain is Glycogen synthase (glgA) from Salmonella typhimurium (strain LT2 / SGSC1412 / ATCC 700720).